The sequence spans 369 residues: Xylene/toluene monooxygenase hydroxylase component XylM (369 aa).

The next 3 helical transmembrane spans lie at 8-28 (LIPV…YWVW), 60-80 (LTQY…VFGV), and 91-111 (LQVA…TLPV). Fe cation is bound by residues His-113, His-117, His-143, His-147, and His-148. A helical transmembrane segment spans residues 207–227 (VALLLALPGLVSYLGGPALGL). Fe cation is bound by residues His-282, His-285, and His-286. The chain crosses the membrane as a helical span at residues 305-325 (MPSLFVCFLLGLIPPLWFALI).

This sequence belongs to the fatty acid desaturase type 1 family. AlkB subfamily. As to quaternary structure, the xylene/toluene monooxygenase is composed of two subunits: the electron transfer component XylA and the hydroxylase component XylM. It depends on Fe(2+) as a cofactor.

The protein localises to the cell inner membrane. The catalysed reaction is m-xylene + 2 reduced [2Fe-2S]-[ferredoxin] + O2 + 2 H(+) = 3-methylbenzyl alcohol + 2 oxidized [2Fe-2S]-[ferredoxin] + H2O. It carries out the reaction p-xylene + 2 reduced [2Fe-2S]-[ferredoxin] + O2 + 2 H(+) = 4-methylbenzyl alcohol + 2 oxidized [2Fe-2S]-[ferredoxin] + H2O. The enzyme catalyses toluene + 2 reduced [2Fe-2S]-[ferredoxin] + O2 + 2 H(+) = benzyl alcohol + 2 oxidized [2Fe-2S]-[ferredoxin] + H2O. Its function is as follows. Component of a monooxygenase that catalyzes the first step in the degradation of xylenes and toluenes. XylM catalyzes the hydroxylation of the methyl side chain of xylenes and toluenes. The electrons are provided by the electron transfer component XylA. The best substrates are m-xylene and p-xylene, followed by toluene. Shows weak activity with o-xylene. In vitro, is also active with substituted compounds, such as chlorotoluenes. Cannot use benzyl alcohol. The chain is Xylene/toluene monooxygenase hydroxylase component XylM from Pseudomonas putida (Arthrobacter siderocapsulatus).